A 310-amino-acid chain; its full sequence is 4-diphosphocytidyl-2-C-methyl-D-erythritol kinase (310 aa).

Lys12 is an active-site residue. 97 to 107 (PIGAGLAGGSS) serves as a coordination point for ATP. Residue Asp139 is part of the active site.

This sequence belongs to the GHMP kinase family. IspE subfamily.

The enzyme catalyses 4-CDP-2-C-methyl-D-erythritol + ATP = 4-CDP-2-C-methyl-D-erythritol 2-phosphate + ADP + H(+). Its pathway is isoprenoid biosynthesis; isopentenyl diphosphate biosynthesis via DXP pathway; isopentenyl diphosphate from 1-deoxy-D-xylulose 5-phosphate: step 3/6. In terms of biological role, catalyzes the phosphorylation of the position 2 hydroxy group of 4-diphosphocytidyl-2C-methyl-D-erythritol. The sequence is that of 4-diphosphocytidyl-2-C-methyl-D-erythritol kinase from Synechococcus sp. (strain CC9311).